The following is a 692-amino-acid chain: Elongation factor G (692 aa).

One can recognise a tr-type G domain in the interval 8–282 (EKTRNIGIMA…GVVDYLPSPV (275 aa)). GTP is bound by residues 17-24 (AHIDAGKT), 81-85 (DTPGH), and 135-138 (NKMD).

Belongs to the TRAFAC class translation factor GTPase superfamily. Classic translation factor GTPase family. EF-G/EF-2 subfamily.

The protein localises to the cytoplasm. Its function is as follows. Catalyzes the GTP-dependent ribosomal translocation step during translation elongation. During this step, the ribosome changes from the pre-translocational (PRE) to the post-translocational (POST) state as the newly formed A-site-bound peptidyl-tRNA and P-site-bound deacylated tRNA move to the P and E sites, respectively. Catalyzes the coordinated movement of the two tRNA molecules, the mRNA and conformational changes in the ribosome. This Geobacillus kaustophilus (strain HTA426) protein is Elongation factor G.